The sequence spans 71 residues: Augerpeptide-s7a (71 aa).

The signal sequence occupies residues 1–20; the sequence is MSALKFVLICGLVLLLIETI. A propeptide spanning residues 21–29 is cleaved from the precursor; the sequence is PGVSLNLMR. Intrachain disulfides connect cysteine 36-cysteine 48, cysteine 42-cysteine 65, and cysteine 47-cysteine 68.

As to expression, expressed by the venom duct.

The protein localises to the secreted. In terms of biological role, elicits an uncoordinated twisting syndrome when injected into C.elegans, but has no effect on mice. This is Augerpeptide-s7a from Terebra subulata (Chocolate spotted auger).